We begin with the raw amino-acid sequence, 367 residues long: tRNA N6-adenosine threonylcarbamoyltransferase (367 aa).

Residues H123 and H127 each coordinate Fe cation. Substrate contacts are provided by residues 145-149, D178, G191, and N288; that span reads LVSGG. Residue D316 coordinates Fe cation.

The protein belongs to the KAE1 / TsaD family. Requires Fe(2+) as cofactor.

It is found in the cytoplasm. The enzyme catalyses L-threonylcarbamoyladenylate + adenosine(37) in tRNA = N(6)-L-threonylcarbamoyladenosine(37) in tRNA + AMP + H(+). In terms of biological role, required for the formation of a threonylcarbamoyl group on adenosine at position 37 (t(6)A37) in tRNAs that read codons beginning with adenine. Is involved in the transfer of the threonylcarbamoyl moiety of threonylcarbamoyl-AMP (TC-AMP) to the N6 group of A37, together with TsaE and TsaB. TsaD likely plays a direct catalytic role in this reaction. The sequence is that of tRNA N6-adenosine threonylcarbamoyltransferase from Caulobacter vibrioides (strain ATCC 19089 / CIP 103742 / CB 15) (Caulobacter crescentus).